The primary structure comprises 693 residues: MNQNFSSMIDQYKHQQLRIGSVSPKQIHAWANKILPNGEIVGEVTKPYTFHYKTNKPEKDGLFCERIFGPIKSGICACGNYRVIGGEKEEPKFCEQCGVESVDSRIRRYQMGYIKLACPVTHVWYLKRLPSYIANLSDKPLKELEGLVYCDFSFARPIAKKPTFLRLRGSFEYEIQSRKYSIPLFFTTQGFDTFRNREISTGATAIREQLADPDLRIIIDRSLVEWKELGEEGSTGNDWEDRKIGRRKDFLVRRMELAKHFLRTNVEPEWMVLCLLPVLPPELRPIIQIDGGKPMSSDINELYRRVIYRNNTLTDLLTTSRSTPGELVMCQEKLVQEAVDTLLDNGIRGQPMRDGHNKVYKSFSDVIEGKEGRFRETLLGKRVDYSGRSVIVVGPSLSLHRCGLPREIAIELFQTFVIRGLIRQNLASNIGLAKSKIREKEPIVWEILQEVMQGHPVLLNRAPTLHRLGIQAFQPILVEGRAICLHPLVCKGFNADFDGDQMAVHVPLSLEAQAEARLLMFSHTNLLSPAIGDPISVPTQDMLMGLYVLTMGNRRGICANRYNPCNSRNYQNERTDHNNYKYRKGKEPYFCSSYDALGAYRQKGIDLYSTLWLRWRLDQRVIASINREIPIEVQYESLGTYHEIYDHYRVVRSVKKGMLCIYIRTTVGHISFYREIEEAVQGFCRSYSYSYGT.

Positions 76, 78, 94, and 97 each coordinate Zn(2+). The Mg(2+) site is built by Asp496, Asp498, and Asp500.

This sequence belongs to the RNA polymerase beta' chain family. RpoC1 subfamily. As to quaternary structure, in plastids the minimal PEP RNA polymerase catalytic core is composed of four subunits: alpha, beta, beta', and beta''. When a (nuclear-encoded) sigma factor is associated with the core the holoenzyme is formed, which can initiate transcription. Requires Mg(2+) as cofactor. Zn(2+) is required as a cofactor.

The protein localises to the plastid. Its subcellular location is the chloroplast. It carries out the reaction RNA(n) + a ribonucleoside 5'-triphosphate = RNA(n+1) + diphosphate. DNA-dependent RNA polymerase catalyzes the transcription of DNA into RNA using the four ribonucleoside triphosphates as substrates. The chain is DNA-directed RNA polymerase subunit beta' from Nuphar advena (Common spatterdock).